Here is a 36-residue protein sequence, read N- to C-terminus: Kappa-theraphotoxin-Pg1b (36 aa).

Intrachain disulfides connect C4/C19, C11/C24, and C18/C31.

This sequence belongs to the neurotoxin 10 (Hwtx-1) family. 44 (Jztx-4) subfamily. Expressed by the venom gland.

The protein resides in the secreted. Gating modifier of Kv2.1/KCNB1, Kv2.2/KCNB2 and Kv4.3/KCND3 channels. This is Kappa-theraphotoxin-Pg1b from Chilobrachys guangxiensis (Chinese earth tiger tarantula).